The chain runs to 170 residues: MADLIMGIDPGTLVCGYALIKVENRYHIHPHSFGKVKLSQKLALAHRYKQLFTEISTILQQESPKAVVLETQYVHKNPQSTIKLGMARGVLLLAASLQDVPVFEYAPNTAKKAAVGKGNASKKQVQLMVSKLLRVPDLLAEDNEDIADAFALAMCHAHLAPYQDLKKTLV.

Residues D9, E70, and D145 contribute to the active site. Residues D9, E70, and D145 each contribute to the Mg(2+) site.

This sequence belongs to the RuvC family. As to quaternary structure, homodimer which binds Holliday junction (HJ) DNA. The HJ becomes 2-fold symmetrical on binding to RuvC with unstacked arms; it has a different conformation from HJ DNA in complex with RuvA. In the full resolvosome a probable DNA-RuvA(4)-RuvB(12)-RuvC(2) complex forms which resolves the HJ. Mg(2+) serves as cofactor.

The protein localises to the cytoplasm. It catalyses the reaction Endonucleolytic cleavage at a junction such as a reciprocal single-stranded crossover between two homologous DNA duplexes (Holliday junction).. Functionally, the RuvA-RuvB-RuvC complex processes Holliday junction (HJ) DNA during genetic recombination and DNA repair. Endonuclease that resolves HJ intermediates. Cleaves cruciform DNA by making single-stranded nicks across the HJ at symmetrical positions within the homologous arms, yielding a 5'-phosphate and a 3'-hydroxyl group; requires a central core of homology in the junction. The consensus cleavage sequence is 5'-(A/T)TT(C/G)-3'. Cleavage occurs on the 3'-side of the TT dinucleotide at the point of strand exchange. HJ branch migration catalyzed by RuvA-RuvB allows RuvC to scan DNA until it finds its consensus sequence, where it cleaves and resolves the cruciform DNA. The sequence is that of Crossover junction endodeoxyribonuclease RuvC from Chlamydia trachomatis serovar L2 (strain ATCC VR-902B / DSM 19102 / 434/Bu).